The sequence spans 217 residues: Probable lipoprotein CPn_0875/CP_0994/CPj0875/CpB0904 (217 aa).

A signal peptide spans 1–21 (MKRVIYKTIFCGLTLLTSLSS). A lipid anchor (N-palmitoyl cysteine) is attached at cysteine 22. Cysteine 22 carries S-diacylglycerol cysteine lipidation.

It belongs to the chlamydial CPn_0875/CT_734/TC_0107 family.

It localises to the cell membrane. The protein is Probable lipoprotein CPn_0875/CP_0994/CPj0875/CpB0904 of Chlamydia pneumoniae (Chlamydophila pneumoniae).